The sequence spans 115 residues: Large ribosomal subunit protein eL30 (115 aa).

Phosphoserine is present on residues serine 10 and serine 16. Lysine 26 carries the post-translational modification N6-acetyllysine; alternate. Lysine 26 is covalently cross-linked (Glycyl lysine isopeptide (Lys-Gly) (interchain with G-Cter in SUMO2); alternate).

The protein belongs to the eukaryotic ribosomal protein eL30 family. In terms of assembly, component of the large ribosomal subunit.

The protein resides in the cytoplasm. Its function is as follows. Component of the large ribosomal subunit. The ribosome is a large ribonucleoprotein complex responsible for the synthesis of proteins in the cell. This chain is Large ribosomal subunit protein eL30 (RPL30), found in Homo sapiens (Human).